Here is a 378-residue protein sequence, read N- to C-terminus: UDP-N-acetylglucosamine--N-acetylmuramyl-(pentapeptide) pyrophosphoryl-undecaprenol N-acetylglucosamine transferase (378 aa).

Residues 14–16 (TGG), Asn-125, Arg-165, Ser-193, and Gln-293 contribute to the UDP-N-acetyl-alpha-D-glucosamine site.

Belongs to the glycosyltransferase 28 family. MurG subfamily.

It is found in the cell inner membrane. The enzyme catalyses di-trans,octa-cis-undecaprenyl diphospho-N-acetyl-alpha-D-muramoyl-L-alanyl-D-glutamyl-meso-2,6-diaminopimeloyl-D-alanyl-D-alanine + UDP-N-acetyl-alpha-D-glucosamine = di-trans,octa-cis-undecaprenyl diphospho-[N-acetyl-alpha-D-glucosaminyl-(1-&gt;4)]-N-acetyl-alpha-D-muramoyl-L-alanyl-D-glutamyl-meso-2,6-diaminopimeloyl-D-alanyl-D-alanine + UDP + H(+). Its pathway is cell wall biogenesis; peptidoglycan biosynthesis. Functionally, cell wall formation. Catalyzes the transfer of a GlcNAc subunit on undecaprenyl-pyrophosphoryl-MurNAc-pentapeptide (lipid intermediate I) to form undecaprenyl-pyrophosphoryl-MurNAc-(pentapeptide)GlcNAc (lipid intermediate II). In Bartonella tribocorum (strain CIP 105476 / IBS 506), this protein is UDP-N-acetylglucosamine--N-acetylmuramyl-(pentapeptide) pyrophosphoryl-undecaprenol N-acetylglucosamine transferase.